The following is a 535-amino-acid chain: Alpha-1,3-mannosyl-glycoprotein 4-beta-N-acetylglucosaminyltransferase A (535 aa).

The Cytoplasmic segment spans residues 1 to 6 (MRLRNG). Residues 7–27 (TVATVLAFITSFLTLSWYTTW) traverse the membrane as a helical; Signal-anchor for type II membrane protein segment. At 28–535 (QNGKEKVIAY…NEIHIKKVTN (508 aa)) the chain is on the lumenal side. Residues 31-57 (KEKVIAYQREFLALKERLRIAEHRISQ) are a coiled coil. 2 N-linked (GlcNAc...) asparagine glycosylation sites follow: Asn-77 and Asn-458. Ser-474 is modified (phosphoserine).

The protein belongs to the glycosyltransferase 54 family. It depends on a divalent metal cation as a cofactor. Post-translationally, N-glycosylated. Highly expressed in small intestine, kidney, lung and spleen. Weakly expressed in brain, heart and liver.

It is found in the golgi apparatus membrane. Its subcellular location is the secreted. It carries out the reaction N(4)-{beta-D-GlcNAc-(1-&gt;2)-alpha-D-Man-(1-&gt;3)-[beta-D-GlcNAc-(1-&gt;2)-alpha-D-Man-(1-&gt;6)]-beta-D-Man-(1-&gt;4)-beta-D-GlcNAc-(1-&gt;4)-beta-D-GlcNAc}-L-asparaginyl-[protein] + UDP-N-acetyl-alpha-D-glucosamine = N(4)-{beta-D-GlcNAc-(1-&gt;2)-[beta-D-GlcNAc-(1-&gt;4)]-alpha-D-Man-(1-&gt;3)-[beta-D-GlcNAc-(1-&gt;2)-alpha-D-Man-(1-&gt;6)]-beta-D-Man-(1-&gt;4)-beta-D-GlcNAc-(1-&gt;4)-beta-D-GlcNAc}-L-asparaginyl-[protein] + UDP + H(+). The enzyme catalyses an N(4)-{beta-D-GlcNAc-(1-&gt;2)-alpha-D-Man-(1-&gt;3)-[alpha-D-Man-(1-&gt;6)]-beta-D-Man-(1-&gt;4)-beta-D-GlcNAc-(1-&gt;4)-beta-D-GlcNAc}-L-asparaginyl-[protein] + UDP-N-acetyl-alpha-D-glucosamine = an N(4)-{beta-D-GlcNAc-(1-&gt;2)-[beta-D-GlcNAc-(1-&gt;4)]-alpha-D-Man-(1-&gt;3)-[alpha-D-Man-(1-&gt;6)]-beta-D-Man-(1-&gt;4)-beta-D-GlcNAc-(1-&gt;4)-beta-D-GlcNAc}-L-asparaginyl-[protein] + UDP + H(+). It catalyses the reaction an N(4)-{beta-D-GlcNAc-(1-&gt;2)-alpha-D-Man-(1-&gt;3)-[beta-D-GlcNAc-(1-&gt;2)-[beta-D-GlcNAc-(1-&gt;6)]-alpha-D-Man-(1-&gt;6)]-beta-D-Man-(1-&gt;4)-beta-D-GlcNAc-(1-&gt;4)-beta-D-GlcNAc}-L-asparaginyl-[protein] + UDP-N-acetyl-alpha-D-glucosamine = an N(4)-{beta-D-GlcNAc-(1-&gt;2)-[beta-D-GlcNAc-(1-&gt;4)]-alpha-D-Man-(1-&gt;3)-[beta-D-GlcNAc-(1-&gt;2)-[beta-D-GlcNAc-(1-&gt;6)]-alpha-D-Man-(1-&gt;6)]-beta-D-Man-(1-&gt;4)-beta-D-GlcNAc-(1-&gt;4)-beta-D-GlcNAc}-L-asparaginyl-[protein] + UDP + H(+). The catalysed reaction is an N(4)-{beta-D-GlcNAc-(1-&gt;2)-alpha-D-Man-(1-&gt;3)-[beta-D-GlcNAc-(1-&gt;2)-alpha-D-Man-(1-&gt;6)]-beta-D-Man-(1-&gt;4)-beta-D-GlcNAc-(1-&gt;4)-[alpha-L-Fuc-(1-&gt;6)]-beta-D-GlcNAc}-L-asparaginyl-[protein] + UDP-N-acetyl-alpha-D-glucosamine = N(4)-{beta-D-GlcNAc-(1-&gt;2)-[beta-D-GlcNAc-(1-&gt;4)]-alpha-D-Man-(1-&gt;3)-[beta-D-GlcNAc-(1-&gt;2)-alpha-D-Man-(1-&gt;6)]-beta-D-Man-(1-&gt;4)-beta-D-GlcNAc-(1-&gt;4)-[alpha-L-Fuc-(1-&gt;6)]-beta-D-GlcNAc}-asparaginyl-[protein] + UDP + H(+). It carries out the reaction an N(4)-{beta-D-GlcNAc-(1-&gt;2)-alpha-D-Man-(1-&gt;3)-[beta-D-Gal-(1-&gt;4)-beta-D-GlcNAc-(1-&gt;2)-alpha-D-Man-(1-&gt;6)]-beta-D-Man-(1-&gt;4)-beta-D-GlcNAc-(1-&gt;4)-beta-D-GlcNAc}-L-asparaginyl-[protein] + UDP-N-acetyl-alpha-D-glucosamine = an N(4)-{beta-D-GlcNAc-(1-&gt;2)-[beta-D-GlcNAc-(1-&gt;4)]-alpha-D-Man-(1-&gt;3)-[beta-D-Gal-(1-&gt;4)-beta-D-GlcNAc-(1-&gt;2)-alpha-D-Man-(1-&gt;6)]-beta-D-Man-(1-&gt;4)-beta-D-GlcNAc-(1-&gt;4)-beta-D-GlcNAc}-L-asparaginyl-[protein] + UDP + H(+). The enzyme catalyses N(4)-{beta-D-GlcNAc-(1-&gt;2)-alpha-D-Man-(1-&gt;3)-[alpha-D-Man-(1-&gt;3)-{alpha-D-Man-(1-&gt;6)}-alpha-D-Man-(1-&gt;6)]-beta-D-Man-(1-&gt;4)-beta-D-GlcNAc-(1-&gt;4)-beta-D-GlcNAc}-asparaginyl-[protein] + UDP-N-acetyl-alpha-D-glucosamine = N(4)-{beta-D-GlcNAc-(1-&gt;2)-[beta-D-GlcNAc-(1-&gt;4)]-alpha-D-Man-(1-&gt;3)-[alpha-D-Man-(1-&gt;3)-{alpha-D-Man-(1-&gt;6)}-alpha-D-Man-(1-&gt;6)]-beta-D-Man-(1-&gt;4)-beta-D-GlcNAc-(1-&gt;4)-beta-D-GlcNAc}-asparaginyl-[protein] + UDP + H(+). It catalyses the reaction N(4)-{beta-D-GlcNAc-(1-&gt;2)-alpha-D-Man-(1-&gt;3)-beta-D-Man-(1-&gt;4)-beta-D-GlcNAc-(1-&gt;4)-beta-D-GlcNAc}-asparaginyl-[protein] + UDP-N-acetyl-alpha-D-glucosamine = N(4)-{beta-D-GlcNAc-(1-&gt;2)-[beta-D-GlcNAc-(1-&gt;4)]-alpha-D-Man-(1-&gt;3)-beta-D-Man-(1-&gt;4)-beta-D-GlcNAc-(1-&gt;4)-beta-D-GlcNAc}-asparaginyl-[protein] + UDP + H(+). Its pathway is protein modification; protein glycosylation. Its activity is regulated as follows. Inhibited by UDP. Glycosyltransferase that catalyze the transfer of GlcNAc from UDP-GlcNAc to the GlcNAcbeta1-2Manalpha1-3 arm of the core structure of N-linked glycans through a beta1-4 linkage and participates in the production of tri- and tetra-antennary N-linked sugar chains. Involved in glucose transport by mediating SLC2A2/GLUT2 glycosylation, thereby controlling cell-surface expression of SLC2A2 in pancreatic beta cells. This Bos taurus (Bovine) protein is Alpha-1,3-mannosyl-glycoprotein 4-beta-N-acetylglucosaminyltransferase A.